The chain runs to 647 residues: Macrolide export ATP-binding/permease protein MacB (647 aa).

In terms of domain architecture, ABC transporter spans 5 to 243 (LELKGIERSY…TQTPSLTSKI (239 aa)). 41-48 (GASGSGKS) contributes to the ATP binding site. A run of 4 helical transmembrane segments spans residues 272–292 (LLTMLGIIIGIASVVTILVIG), 522–542 (LFLTMVAVISLIVGGIGVMNI), 576–596 (ILVCLVGGVLGIGLSYTIAFI), and 610–630 (PIALLSAFACSTAIGVIFGFL).

Belongs to the ABC transporter superfamily. Macrolide exporter (TC 3.A.1.122) family. In terms of assembly, homodimer. Part of the tripartite efflux system MacAB-TolC, which is composed of an inner membrane transporter, MacB, a periplasmic membrane fusion protein, MacA, and an outer membrane component, TolC. The complex forms a large protein conduit and can translocate molecules across both the inner and outer membranes. Interacts with MacA.

The protein localises to the cell inner membrane. Part of the tripartite efflux system MacAB-TolC. MacB is a non-canonical ABC transporter that contains transmembrane domains (TMD), which form a pore in the inner membrane, and an ATP-binding domain (NBD), which is responsible for energy generation. Confers resistance against macrolides. The protein is Macrolide export ATP-binding/permease protein MacB of Photorhabdus laumondii subsp. laumondii (strain DSM 15139 / CIP 105565 / TT01) (Photorhabdus luminescens subsp. laumondii).